A 184-amino-acid polypeptide reads, in one-letter code: ATP synthase subunit b, chloroplastic (184 aa).

Residues 27 to 49 form a helical membrane-spanning segment; it reads FATNPINLSVVLGVLIFFGKGVL.

The protein belongs to the ATPase B chain family. As to quaternary structure, F-type ATPases have 2 components, F(1) - the catalytic core - and F(0) - the membrane proton channel. F(1) has five subunits: alpha(3), beta(3), gamma(1), delta(1), epsilon(1). F(0) has four main subunits: a(1), b(1), b'(1) and c(10-14). The alpha and beta chains form an alternating ring which encloses part of the gamma chain. F(1) is attached to F(0) by a central stalk formed by the gamma and epsilon chains, while a peripheral stalk is formed by the delta, b and b' chains.

The protein resides in the plastid. It is found in the chloroplast thylakoid membrane. Functionally, f(1)F(0) ATP synthase produces ATP from ADP in the presence of a proton or sodium gradient. F-type ATPases consist of two structural domains, F(1) containing the extramembraneous catalytic core and F(0) containing the membrane proton channel, linked together by a central stalk and a peripheral stalk. During catalysis, ATP synthesis in the catalytic domain of F(1) is coupled via a rotary mechanism of the central stalk subunits to proton translocation. Its function is as follows. Component of the F(0) channel, it forms part of the peripheral stalk, linking F(1) to F(0). The sequence is that of ATP synthase subunit b, chloroplastic from Ipomoea purpurea (Common morning glory).